Consider the following 206-residue polypeptide: Imidazoleglycerol-phosphate dehydratase (206 aa).

The protein belongs to the imidazoleglycerol-phosphate dehydratase family.

Its subcellular location is the cytoplasm. The catalysed reaction is D-erythro-1-(imidazol-4-yl)glycerol 3-phosphate = 3-(imidazol-4-yl)-2-oxopropyl phosphate + H2O. Its pathway is amino-acid biosynthesis; L-histidine biosynthesis; L-histidine from 5-phospho-alpha-D-ribose 1-diphosphate: step 6/9. This Mycolicibacterium smegmatis (strain ATCC 700084 / mc(2)155) (Mycobacterium smegmatis) protein is Imidazoleglycerol-phosphate dehydratase.